The sequence spans 311 residues: Large ribosomal subunit protein uL22 (311 aa).

The protein belongs to the universal ribosomal protein uL22 family. In terms of assembly, part of the 50S ribosomal subunit.

Its function is as follows. This protein binds specifically to 23S rRNA; its binding is stimulated by other ribosomal proteins, e.g. L4, L17, and L20. It is important during the early stages of 50S assembly. It makes multiple contacts with different domains of the 23S rRNA in the assembled 50S subunit and ribosome. Functionally, the globular domain of the protein is located near the polypeptide exit tunnel on the outside of the subunit, while an extended beta-hairpin is found that lines the wall of the exit tunnel in the center of the 70S ribosome. This chain is Large ribosomal subunit protein uL22 (rplV), found in Ureaplasma parvum serovar 3 (strain ATCC 27815 / 27 / NCTC 11736).